A 460-amino-acid chain; its full sequence is Biphenyl 2,3-dioxygenase subunit alpha (460 aa).

One can recognise a Rieske domain in the interval 56–165 (WLLMGHETQI…VETYKGLIFA (110 aa)). Positions 98, 100, 118, and 121 each coordinate [2Fe-2S] cluster. 217–230 (QFCSDMYHAGTTSH) provides a ligand contact to substrate. The Fe cation site is built by H224, H230, and D378.

The protein belongs to the bacterial ring-hydroxylating dioxygenase alpha subunit family. As to quaternary structure, heterohexamer consisting of three BphA1 subunits and three BphA2 subunits. The multicomponent biphenyl dioxygenase system is composed of a ferredoxin reductase (BphA4), a ferredoxin (BphA3), and a terminal oxygenase (BphA1A2). Requires [2Fe-2S] cluster as cofactor. Fe cation is required as a cofactor.

The enzyme catalyses biphenyl + NADH + O2 + H(+) = (2R,3S)-3-phenylcyclohexa-3,5-diene-1,2-diol + NAD(+). Its pathway is xenobiotic degradation; biphenyl degradation; 2-hydroxy-2,4-pentadienoate and benzoate from biphenyl: step 1/4. Part of the oxygenase component of the biphenyl dioxygenase system that catalyzes the stereospecific dihydroxylation of the aromatic ring of biphenyl, yielding a dihydrodiol compound. Is essential for biphenyl degradation and growth of Rhodococcus sp. strain RHA1 on biphenyl as the sole source of carbon and energy. Can also use naphtalene and 4-chlorobiphenyl (4-CB) as substrates, as well as some polychlorinated biphenyls (PCB) such as 2,2'-dichlorobiphenyl, 2,3-dichlorobiphenyl and 2,5,2'-trichlorobiphenyl. Exhibits weak activity toward dibenzofuran and dibenzo-p-dioxin. Electrons are transferred from NADH to the [2Fe-2S] cluster in BphA1 via FAD of BphA4 and [2Fe-2S] cluster of BphA3. This chain is Biphenyl 2,3-dioxygenase subunit alpha, found in Rhodococcus jostii (strain RHA1).